A 179-amino-acid polypeptide reads, in one-letter code: Cytochrome b6-f complex iron-sulfur subunit (179 aa).

Residues Leu20–Ile42 traverse the membrane as a helical segment. In terms of domain architecture, Rieske spans Gly60–Val161. The [2Fe-2S] cluster site is built by Cys107, His109, Cys125, and His128. Cys112 and Cys127 form a disulfide bridge.

The protein belongs to the Rieske iron-sulfur protein family. In terms of assembly, the 4 large subunits of the cytochrome b6-f complex are cytochrome b6, subunit IV (17 kDa polypeptide, PetD), cytochrome f and the Rieske protein, while the 4 small subunits are PetG, PetL, PetM and PetN. The complex functions as a dimer. [2Fe-2S] cluster is required as a cofactor.

The protein localises to the cellular thylakoid membrane. It catalyses the reaction 2 oxidized [plastocyanin] + a plastoquinol + 2 H(+)(in) = 2 reduced [plastocyanin] + a plastoquinone + 4 H(+)(out). Functionally, component of the cytochrome b6-f complex, which mediates electron transfer between photosystem II (PSII) and photosystem I (PSI), cyclic electron flow around PSI, and state transitions. This Microcystis aeruginosa (strain NIES-843 / IAM M-2473) protein is Cytochrome b6-f complex iron-sulfur subunit.